Here is a 317-residue protein sequence, read N- to C-terminus: Zinc finger protein CRM3 (317 aa).

Over residues 1-15 the composition is skewed to low complexity; the sequence is MNFSLSKQSSEKQSS. Residues 1–22 are disordered; that stretch reads MNFSLSKQSSEKQSSYTDKSRS. 2 C2H2-type zinc fingers span residues 254–276 and 282–306; these read KQCP…YLIH and FKCT…LKSH.

It is found in the nucleus. Its function is as follows. Probable transcription factor involved in the regulation of the transcription of genes involved in cell rescue and defense, as well as cell cycle and DNA processing. In Saccharomyces cerevisiae (strain ATCC 204508 / S288c) (Baker's yeast), this protein is Zinc finger protein CRM3.